Here is a 152-residue protein sequence, read N- to C-terminus: Large ribosomal subunit protein bL9 (152 aa).

Belongs to the bacterial ribosomal protein bL9 family.

Binds to the 23S rRNA. This Picosynechococcus sp. (strain ATCC 27264 / PCC 7002 / PR-6) (Agmenellum quadruplicatum) protein is Large ribosomal subunit protein bL9.